Reading from the N-terminus, the 343-residue chain is UDP-N-acetylglucosamine--N-acetylmuramyl-(pentapeptide) pyrophosphoryl-undecaprenol N-acetylglucosamine transferase (343 aa).

UDP-N-acetyl-alpha-D-glucosamine contacts are provided by residues threonine 10 to glycine 12, asparagine 113, serine 174, and glutamine 275.

The protein belongs to the glycosyltransferase 28 family. MurG subfamily.

It localises to the cell membrane. It carries out the reaction di-trans,octa-cis-undecaprenyl diphospho-N-acetyl-alpha-D-muramoyl-L-alanyl-D-glutamyl-meso-2,6-diaminopimeloyl-D-alanyl-D-alanine + UDP-N-acetyl-alpha-D-glucosamine = di-trans,octa-cis-undecaprenyl diphospho-[N-acetyl-alpha-D-glucosaminyl-(1-&gt;4)]-N-acetyl-alpha-D-muramoyl-L-alanyl-D-glutamyl-meso-2,6-diaminopimeloyl-D-alanyl-D-alanine + UDP + H(+). It functions in the pathway cell wall biogenesis; peptidoglycan biosynthesis. Its function is as follows. Cell wall formation. Catalyzes the transfer of a GlcNAc subunit on undecaprenyl-pyrophosphoryl-MurNAc-pentapeptide (lipid intermediate I) to form undecaprenyl-pyrophosphoryl-MurNAc-(pentapeptide)GlcNAc (lipid intermediate II). The chain is UDP-N-acetylglucosamine--N-acetylmuramyl-(pentapeptide) pyrophosphoryl-undecaprenol N-acetylglucosamine transferase from Wolbachia sp. subsp. Brugia malayi (strain TRS).